Reading from the N-terminus, the 609-residue chain is Dihydroxy-acid dehydratase (609 aa).

Position 81 (D81) interacts with Mg(2+). C122 contributes to the [2Fe-2S] cluster binding site. Mg(2+) contacts are provided by D123 and K124. The residue at position 124 (K124) is an N6-carboxylysine. C195 lines the [2Fe-2S] cluster pocket. Position 491 (E491) interacts with Mg(2+). Catalysis depends on S517, which acts as the Proton acceptor.

Belongs to the IlvD/Edd family. In terms of assembly, homodimer. The cofactor is [2Fe-2S] cluster. Requires Mg(2+) as cofactor.

It catalyses the reaction (2R)-2,3-dihydroxy-3-methylbutanoate = 3-methyl-2-oxobutanoate + H2O. It carries out the reaction (2R,3R)-2,3-dihydroxy-3-methylpentanoate = (S)-3-methyl-2-oxopentanoate + H2O. It participates in amino-acid biosynthesis; L-isoleucine biosynthesis; L-isoleucine from 2-oxobutanoate: step 3/4. It functions in the pathway amino-acid biosynthesis; L-valine biosynthesis; L-valine from pyruvate: step 3/4. In terms of biological role, functions in the biosynthesis of branched-chain amino acids. Catalyzes the dehydration of (2R,3R)-2,3-dihydroxy-3-methylpentanoate (2,3-dihydroxy-3-methylvalerate) into 2-oxo-3-methylpentanoate (2-oxo-3-methylvalerate) and of (2R)-2,3-dihydroxy-3-methylbutanoate (2,3-dihydroxyisovalerate) into 2-oxo-3-methylbutanoate (2-oxoisovalerate), the penultimate precursor to L-isoleucine and L-valine, respectively. The polypeptide is Dihydroxy-acid dehydratase (Acinetobacter baumannii (strain AB0057)).